A 475-amino-acid polypeptide reads, in one-letter code: PRAME family member 20 (475 aa).

Residues 97 to 124 (RWKLQVLDLQDVSENFWMVWSEAMARRC) form an LRR 1; degenerate repeat. Residues 179-203 (HLCCKKLKMLGMLFHNIRNILKTVN) form an LRR 2; degenerate repeat. Residues 204 to 230 (LDCIQEVEVNCNWTLPVLAEFTPYLGQ) form an LRR 3; degenerate repeat. The LRR 4; degenerate repeat unit spans residues 231–265 (MRNLRKLVLSDIDSRYISPEQKKEFVTQFTTQFLK). LRR repeat units lie at residues 266–291 (LRCLQKLYMNSVSFLEGHLDQMLSCL), 292–323 (KTSLNILAITNCVLLESDLKHLSKYPSIGQLK), 324–342 (TLDLSGTRLANFSLVPLQV), 348–375 (AATLEYLDLDDCGIVDSQVNAILPALSR), and 376–400 (CFELTTFSFRGNPISTATLENLLCH).

This sequence belongs to the PRAME family.

The chain is PRAME family member 20 from Homo sapiens (Human).